The sequence spans 165 residues: Small ribosomal subunit protein uS5 (165 aa).

The region spanning 10 to 73 (QIEKLISLNR…TSARKNLRFV (64 aa)) is the S5 DRBM domain.

The protein belongs to the universal ribosomal protein uS5 family. As to quaternary structure, part of the 30S ribosomal subunit. Contacts proteins S4 and S8.

With S4 and S12 plays an important role in translational accuracy. In terms of biological role, located at the back of the 30S subunit body where it stabilizes the conformation of the head with respect to the body. The sequence is that of Small ribosomal subunit protein uS5 from Borreliella burgdorferi (strain ATCC 35210 / DSM 4680 / CIP 102532 / B31) (Borrelia burgdorferi).